A 473-amino-acid chain; its full sequence is Trigger factor (473 aa).

Residues glycine 171–alanine 256 enclose the PPIase FKBP-type domain. The interval lysine 439 to aspartate 473 is disordered. Residues proline 456 to aspartate 473 show a composition bias toward basic and acidic residues.

Belongs to the FKBP-type PPIase family. Tig subfamily.

It is found in the cytoplasm. The catalysed reaction is [protein]-peptidylproline (omega=180) = [protein]-peptidylproline (omega=0). Its function is as follows. Involved in protein export. Acts as a chaperone by maintaining the newly synthesized protein in an open conformation. Functions as a peptidyl-prolyl cis-trans isomerase. The sequence is that of Trigger factor from Methylobacterium radiotolerans (strain ATCC 27329 / DSM 1819 / JCM 2831 / NBRC 15690 / NCIMB 10815 / 0-1).